The following is a 267-amino-acid chain: Tryptophan synthase alpha chain (267 aa).

Residues Glu-49 and Asp-60 each act as proton acceptor in the active site.

This sequence belongs to the TrpA family. As to quaternary structure, tetramer of two alpha and two beta chains.

It catalyses the reaction (1S,2R)-1-C-(indol-3-yl)glycerol 3-phosphate + L-serine = D-glyceraldehyde 3-phosphate + L-tryptophan + H2O. The protein operates within amino-acid biosynthesis; L-tryptophan biosynthesis; L-tryptophan from chorismate: step 5/5. Functionally, the alpha subunit is responsible for the aldol cleavage of indoleglycerol phosphate to indole and glyceraldehyde 3-phosphate. The protein is Tryptophan synthase alpha chain of Acaryochloris marina (strain MBIC 11017).